Consider the following 106-residue polypeptide: Adipokinetic hormone/corazonin-related peptide (106 aa).

The signal sequence occupies residues 1–25 (MRNSIYKLIMFAVLCMVLTSSLSYA). At Gln-26 the chain carries Pyrrolidone carboxylic acid. Ala-35 bears the Alanine amide mark. A propeptide spanning residues 39-106 (SLAEAAQSTG…GLPLFSNGHL (68 aa)) is cleaved from the precursor.

The protein belongs to the AKH/HRTH/RPCH family. As to expression, only expressed in the head and thorax body segments of adults. Is more expressed in adult males than in females.

Its subcellular location is the secreted. Neuropeptide with neuromodulator or neurotransmitter role that activates the adipokinetic hormone/corazonin-related peptide receptor (ACPR). May function in regulation of post-ecdysis activities. Does not activate the A.gambiae adipokinetic hormone (AKH) and corazonin (CRZ) receptors. In Aedes aegypti (Yellowfever mosquito), this protein is Adipokinetic hormone/corazonin-related peptide.